Here is a 52-residue protein sequence, read N- to C-terminus: MPFRAALRKVPVELYPLGAAVATAVGFATYSMGKKLLADPNVHIDPTVRRTI.

Residues 14–30 (LYPLGAAVATAVGFATY) traverse the membrane as a helical segment.

This sequence belongs to the complex I NDUFA4 subunit family.

The protein localises to the mitochondrion inner membrane. Its function is as follows. Accessory subunit of the mitochondrial membrane respiratory chain NADH dehydrogenase (Complex I), that is believed to be not involved in catalysis. Complex I functions in the transfer of electrons from NADH to the respiratory chain. The immediate electron acceptor for the enzyme is believed to be ubiquinone. The sequence is that of NADH dehydrogenase [ubiquinone] 1 alpha subcomplex subunit 4 homolog from Schizosaccharomyces pombe (strain 972 / ATCC 24843) (Fission yeast).